The chain runs to 465 residues: Ribulose bisphosphate carboxylase large chain (465 aa).

K4 is subject to N6,N6,N6-trimethyllysine. N113 and T163 together coordinate substrate. The Proton acceptor role is filled by K165. K167 lines the substrate pocket. 3 residues coordinate Mg(2+): K191, D193, and E194. K191 carries the post-translational modification N6-carboxylysine. The Proton acceptor role is filled by H284. 3 residues coordinate substrate: R285, H317, and S369.

The protein belongs to the RuBisCO large chain family. Type I subfamily. Heterohexadecamer of 8 large chains and 8 small chains; disulfide-linked. The disulfide link is formed within the large subunit homodimers. It depends on Mg(2+) as a cofactor. Post-translationally, the disulfide bond which can form in the large chain dimeric partners within the hexadecamer appears to be associated with oxidative stress and protein turnover.

The protein resides in the plastid. The protein localises to the chloroplast. The catalysed reaction is 2 (2R)-3-phosphoglycerate + 2 H(+) = D-ribulose 1,5-bisphosphate + CO2 + H2O. The enzyme catalyses D-ribulose 1,5-bisphosphate + O2 = 2-phosphoglycolate + (2R)-3-phosphoglycerate + 2 H(+). RuBisCO catalyzes two reactions: the carboxylation of D-ribulose 1,5-bisphosphate, the primary event in carbon dioxide fixation, as well as the oxidative fragmentation of the pentose substrate in the photorespiration process. Both reactions occur simultaneously and in competition at the same active site. The sequence is that of Ribulose bisphosphate carboxylase large chain from Idesia polycarpa (Iigiri tree).